Consider the following 863-residue polypeptide: Receptor-like protein 9DC3 (863 aa).

A signal peptide spans 1 to 21 (MGCVKLVFFMLYVFLFQLVSS). Topologically, residues 22–812 (SSLPHLCPED…EEDSPMISWQ (791 aa)) are extracellular. Residues 24–90 (LPHLCPEDQA…GVHCDETTGQ (67 aa)) are N-cap. N-linked (GlcNAc...) asparagine glycosylation is found at asparagine 71 and asparagine 108. Residues 91 to 114 (VIALDLRCSQLQGKFHSNSSLFQL) form an LRR 1; degenerate repeat. LRR repeat units follow at residues 115-138 (SNLK…KFGE) and 140-163 (SDLT…ISHL). One copy of the LRR 4; degenerate repeat lies at 164–190 (SKLHVLLIGDQYGLSIVPHNFEPLLKN). 3 N-linked (GlcNAc...) asparagine glycosylation sites follow: asparagine 190, asparagine 203, and asparagine 211. 6 LRR repeats span residues 191–213 (LTQL…SNFS), 214–237 (SHLT…VFHL), 240–262 (LEFL…KWNS), 264–286 (ASLM…SFSH), 287–311 (LTSL…LWNL), and 312–336 (TNIE…IFEK). Asparagine 261 is a glycosylation site (N-linked (GlcNAc...) asparagine). Asparagine 299 and asparagine 310 each carry an N-linked (GlcNAc...) asparagine glycan. Residues 337-357 (LKKLSLFRNDNLDGGLEFLSF) form an LRR 11; degenerate repeat. 15 LRR repeats span residues 358–382 (NTQL…ISGL), 383–406 (QNLE…IFSL), 408–428 (SLVE…EFKS), 429–452 (KTLS…LLNQ), 454–476 (NLQL…ICNL), 477–500 (KTLI…VVER), 502–524 (EYLS…TFSV), 525–549 (GNIL…LINC), 551–572 (YLAL…WLGH), 573–597 (LSQL…GNTN), 599–623 (FTRL…ILGN), 667–690 (LDSN…IIGD), 691–714 (LVGL…SFQN), 715–739 (LSVL…LASL), and 741–759 (FLEV…IPKG). N-linked (GlcNAc...) asparagine glycosylation is found at asparagine 378, asparagine 396, and asparagine 416. An N-linked (GlcNAc...) asparagine glycan is attached at asparagine 464. N-linked (GlcNAc...) asparagine glycosylation occurs at asparagine 519. The N-linked (GlcNAc...) asparagine glycan is linked to asparagine 563. Asparagine 674, asparagine 698, and asparagine 714 each carry an N-linked (GlcNAc...) asparagine glycan. 2 N-linked (GlcNAc...) asparagine glycosylation sites follow: asparagine 746 and asparagine 767. The C-cap/acidic domain stretch occupies residues 760 to 812 (KQFDSFGNTSYQGNDGLCGFPLSKLCGGDDQVTTPAELDQEEEEEDSPMISWQ). A helical membrane pass occupies residues 813–833 (GVLVGYGCGLVIGLSVIYIMW). The Cytoplasmic portion of the chain corresponds to 834-863 (STQYPAWFSRMHLKLEQIVTTRMKKHKKRY).

It belongs to the RLP family.

The protein resides in the cell membrane. Its function is as follows. Involved in plant defense. Confers resistance to the fungal pathogen C.fulvum through recognition of the AVR9 elicitor protein. The protein is Receptor-like protein 9DC3 of Solanum pimpinellifolium (Currant tomato).